Reading from the N-terminus, the 171-residue chain is Large ribosomal subunit protein uL10 (171 aa).

It belongs to the universal ribosomal protein uL10 family. In terms of assembly, part of the ribosomal stalk of the 50S ribosomal subunit. The N-terminus interacts with L11 and the large rRNA to form the base of the stalk. The C-terminus forms an elongated spine to which L12 dimers bind in a sequential fashion forming a multimeric L10(L12)X complex.

Forms part of the ribosomal stalk, playing a central role in the interaction of the ribosome with GTP-bound translation factors. This Cereibacter sphaeroides (strain ATCC 17023 / DSM 158 / JCM 6121 / CCUG 31486 / LMG 2827 / NBRC 12203 / NCIMB 8253 / ATH 2.4.1.) (Rhodobacter sphaeroides) protein is Large ribosomal subunit protein uL10.